The following is a 311-amino-acid chain: Putative HTH-type transcriptional regulatory protein PTO0557 (311 aa).

The HTH cro/C1-type domain maps to Met-132–Ile-186. Residues Val-143–Ser-162 constitute a DNA-binding region (H-T-H motif).

In Picrophilus torridus (strain ATCC 700027 / DSM 9790 / JCM 10055 / NBRC 100828 / KAW 2/3), this protein is Putative HTH-type transcriptional regulatory protein PTO0557.